Here is a 216-residue protein sequence, read N- to C-terminus: UPF0323 lipoprotein HPAG1_0235 (216 aa).

The N-terminal stretch at 1–27 (MKKPYRKISDYAIVGGLSALVMVSIVG) is a signal peptide. C28 is lipidated: N-palmitoyl cysteine. A lipid anchor (S-diacylglycerol cysteine) is attached at C28. Residues 159-196 (QRTYKSPQAYQRSQNSFSKSAPSASGMGTASKGQSGFF) show a composition bias toward polar residues. A disordered region spans residues 159–216 (QRTYKSPQAYQRSQNSFSKSAPSASGMGTASKGQSGFFGSSRPTSSPAVSSGTRGFNA). Residues 198–209 (SSRPTSSPAVSS) show a composition bias toward low complexity.

The protein belongs to the UPF0323 family.

The protein resides in the cell membrane. This Helicobacter pylori (strain HPAG1) protein is UPF0323 lipoprotein HPAG1_0235.